The primary structure comprises 109 residues: Nucleoid-associated protein CC_0268 (109 aa).

The protein belongs to the YbaB/EbfC family. Homodimer.

It localises to the cytoplasm. It is found in the nucleoid. In terms of biological role, binds to DNA and alters its conformation. May be involved in regulation of gene expression, nucleoid organization and DNA protection. This is Nucleoid-associated protein CC_0268 from Caulobacter vibrioides (strain ATCC 19089 / CIP 103742 / CB 15) (Caulobacter crescentus).